A 91-amino-acid polypeptide reads, in one-letter code: MLGTRNIPTTSGLPLPPPSSSLSAYIFPTILAIIFAVFALVAIHITTPEPFCTIHIDGASITITNCPDPAAILNKVAIGPWRGLSYHNNLK.

Over 1-23 (MLGTRNIPTTSGLPLPPPSSSLS) the chain is Lumenal. A helical transmembrane segment spans residues 24 to 46 (AYIFPTILAIIFAVFALVAIHIT). The Cytoplasmic segment spans residues 47–91 (TPEPFCTIHIDGASITITNCPDPAAILNKVAIGPWRGLSYHNNLK).

Belongs to the Tymovirales TGBp3 protein family.

It localises to the host endoplasmic reticulum membrane. Its function is as follows. Plays a role in viral cell-to-cell propagation, by facilitating genome transport to neighboring plant cells through plasmosdesmata. May induce the formation of granular vesicles derived from the Endoplasmic reticulum, which align on actin filaments. In Cymbidium mosaic virus (strain Singapore), this protein is Movement protein TGBp3.